A 210-amino-acid chain; its full sequence is Vacuolar protein sorting-associated protein 2 homolog 3 (210 aa).

The tract at residues 1 to 23 (MNIFTKKPNPREVLRESKREMTQ) is disordered. Residues 9–23 (NPREVLRESKREMTQ) are compositionally biased toward basic and acidic residues. Positions 28-84 (IEKEIGSLQSEEKKLVLEIKRTAKSGNEGATKILARQLIRLRQQIANLQGSRAQMRG) form a coiled coil. Residues 178 to 200 (LSSAPKGKIGGKKAEDVGSSGID) form a disordered region.

It belongs to the SNF7 family. In terms of assembly, component of the endosomal sorting required for transport complex III (ESCRT-III), composed at least of VPS2, VPS20, VPS24 and VPS32.

The protein localises to the endosome. Its function is as follows. Component of the ESCRT-III complex, which is required for multivesicular bodies (MVBs) formation and sorting of endosomal cargo proteins into MVBs. The ESCRT-III complex is probably involved in the concentration of MVB cargo. The polypeptide is Vacuolar protein sorting-associated protein 2 homolog 3 (VPS2.3) (Arabidopsis thaliana (Mouse-ear cress)).